Reading from the N-terminus, the 281-residue chain is Bis(5'-nucleosyl)-tetraphosphatase, symmetrical (281 aa).

This sequence belongs to the Ap4A hydrolase family.

It catalyses the reaction P(1),P(4)-bis(5'-adenosyl) tetraphosphate + H2O = 2 ADP + 2 H(+). Its function is as follows. Hydrolyzes diadenosine 5',5'''-P1,P4-tetraphosphate to yield ADP. The chain is Bis(5'-nucleosyl)-tetraphosphatase, symmetrical from Acidovorax ebreus (strain TPSY) (Diaphorobacter sp. (strain TPSY)).